A 379-amino-acid chain; its full sequence is UDP-4-amino-4-deoxy-L-arabinose--oxoglutarate aminotransferase (379 aa).

K182 carries the N6-(pyridoxal phosphate)lysine modification.

This sequence belongs to the DegT/DnrJ/EryC1 family. ArnB subfamily. Homodimer. Pyridoxal 5'-phosphate is required as a cofactor.

It catalyses the reaction UDP-4-amino-4-deoxy-beta-L-arabinose + 2-oxoglutarate = UDP-beta-L-threo-pentopyranos-4-ulose + L-glutamate. Its pathway is nucleotide-sugar biosynthesis; UDP-4-deoxy-4-formamido-beta-L-arabinose biosynthesis; UDP-4-deoxy-4-formamido-beta-L-arabinose from UDP-alpha-D-glucuronate: step 2/3. The protein operates within bacterial outer membrane biogenesis; lipopolysaccharide biosynthesis. Its function is as follows. Catalyzes the conversion of UDP-4-keto-arabinose (UDP-Ara4O) to UDP-4-amino-4-deoxy-L-arabinose (UDP-L-Ara4N). The modified arabinose is attached to lipid A and is required for resistance to polymyxin and cationic antimicrobial peptides. This chain is UDP-4-amino-4-deoxy-L-arabinose--oxoglutarate aminotransferase, found in Escherichia coli O157:H7.